The primary structure comprises 154 residues: uncharacterized protein (154 aa).

Residues 7-143 (RSELEKTAVQ…IFSFVGKAAD (137 aa)) enclose the HTH marR-type domain. The segment at residues 57 to 80 (AGELGKKTGLSTGSVTALVDRLEK) is a DNA-binding region (H-T-H motif).

This is an uncharacterized protein from Bacillus subtilis (strain 168).